The following is a 424-amino-acid chain: Vasopressin V1a receptor (424 aa).

Positions methionine 1–serine 40 are disordered. Over methionine 1 to lysine 52 the chain is Extracellular. A compositionally biased stretch (polar residues) spans aspartate 9–glutamine 30. Asparagine 27 carries N-linked (GlcNAc...) asparagine glycosylation. The chain crosses the membrane as a helical span at residues leucine 53 to leucine 76. At histidine 77–leucine 88 the chain is on the cytoplasmic side. The chain crosses the membrane as a helical span at residues phenylalanine 89–cysteine 110. Residues tryptophan 111 to arginine 125 lie on the Extracellular side of the membrane. Cysteine 124 and cysteine 205 are oxidised to a cystine. Residues valine 126 to alanine 147 form a helical membrane-spanning segment. Over aspartate 148–arginine 168 the chain is Cytoplasmic. A helical transmembrane segment spans residues leucine 169–serine 190. The Extracellular segment spans residues valine 191 to threonine 220. A helical membrane pass occupies residues tryptophan 221–isoleucine 241. The Cytoplasmic portion of the chain corresponds to cysteine 242–threonine 299. Residues phenylalanine 300–tryptophan 319 form a helical membrane-spanning segment. The Extracellular portion of the chain corresponds to serine 320 to threonine 337. Residues isoleucine 338–phenylalanine 357 form a helical membrane-spanning segment. Over serine 358–threonine 424 the chain is Cytoplasmic. S-palmitoyl cysteine attachment occurs at residues cysteine 371 and cysteine 372. The segment at aspartate 383–serine 416 is disordered. Positions arginine 389–glycine 405 are enriched in polar residues. The residue at position 410 (serine 410) is a Phosphoserine.

This sequence belongs to the G-protein coupled receptor 1 family. Vasopressin/oxytocin receptor subfamily. Palmitoylated on three cysteine residues, of which only two are identified. As to expression, localized within gonadotropes of the anterior pituitary of the brain. Broadly distributed throughout the cerebral cortex.

Its subcellular location is the cell membrane. It is found in the cytoplasmic vesicle membrane. Receptor for arginine vasopressin. The activity of this receptor is mediated by G proteins which activate a phosphatidyl-inositol-calcium second messenger system. Involved in social memory formation. The chain is Vasopressin V1a receptor (Avpr1a) from Rattus norvegicus (Rat).